Consider the following 334-residue polypeptide: S-adenosylmethionine:tRNA ribosyltransferase-isomerase (334 aa).

Belongs to the QueA family. Monomer.

It is found in the cytoplasm. The catalysed reaction is 7-aminomethyl-7-carbaguanosine(34) in tRNA + S-adenosyl-L-methionine = epoxyqueuosine(34) in tRNA + adenine + L-methionine + 2 H(+). It participates in tRNA modification; tRNA-queuosine biosynthesis. Its function is as follows. Transfers and isomerizes the ribose moiety from AdoMet to the 7-aminomethyl group of 7-deazaguanine (preQ1-tRNA) to give epoxyqueuosine (oQ-tRNA). The protein is S-adenosylmethionine:tRNA ribosyltransferase-isomerase of Rubrobacter xylanophilus (strain DSM 9941 / JCM 11954 / NBRC 16129 / PRD-1).